The following is a 504-amino-acid chain: Cytochrome P450 4A2 (504 aa).

A propeptide spanning residues 1 to 4 (MGFS) is cleaved from the precursor. Residue glutamate 315 coordinates heme. Serine 434 is modified (phosphoserine). Cysteine 451 lines the heme pocket.

This sequence belongs to the cytochrome P450 family. The cofactor is heme.

The protein localises to the endoplasmic reticulum membrane. Its subcellular location is the microsome membrane. The enzyme catalyses an omega-methyl-long-chain fatty acid + reduced [NADPH--hemoprotein reductase] + O2 = an omega-hydroxy-long-chain fatty acid + oxidized [NADPH--hemoprotein reductase] + H2O + H(+). It carries out the reaction dodecanoate + reduced [NADPH--hemoprotein reductase] + O2 = (11R)-hydroxydodecanoate + oxidized [NADPH--hemoprotein reductase] + H2O + H(+). The catalysed reaction is dodecanoate + reduced [NADPH--hemoprotein reductase] + O2 = 12-hydroxydodecanoate + oxidized [NADPH--hemoprotein reductase] + H2O + H(+). It catalyses the reaction tetradecanoate + reduced [NADPH--hemoprotein reductase] + O2 = 14-hydroxytetradecanoate + oxidized [NADPH--hemoprotein reductase] + H2O + H(+). The enzyme catalyses hexadecanoate + reduced [NADPH--hemoprotein reductase] + O2 = 16-hydroxyhexadecanoate + oxidized [NADPH--hemoprotein reductase] + H2O + H(+). It functions in the pathway lipid metabolism; fatty acid metabolism. A cytochrome P450 monooxygenase that catalyzes omega and omega-1 hydroxylation of saturated fatty acids. Exhibits preferential omega versus omega-1 regioselectivity and (R) versus (S) stereoselectivity for hydroxylation of lauric and myristic acids. Has low activity toward palmitic acid. Mechanistically, uses molecular oxygen inserting one oxygen atom into a substrate, and reducing the second into a water molecule, with two electrons provided by NADPH via cytochrome P450 reductase (CPR; NADPH-ferrihemoprotein reductase). The polypeptide is Cytochrome P450 4A2 (Rattus norvegicus (Rat)).